The primary structure comprises 196 residues: FMN-dependent NADH:quinone oxidoreductase (196 aa).

An FMN-binding site is contributed by serine 10.

The protein belongs to the azoreductase type 1 family. In terms of assembly, homodimer. FMN serves as cofactor.

It catalyses the reaction 2 a quinone + NADH + H(+) = 2 a 1,4-benzosemiquinone + NAD(+). It carries out the reaction N,N-dimethyl-1,4-phenylenediamine + anthranilate + 2 NAD(+) = 2-(4-dimethylaminophenyl)diazenylbenzoate + 2 NADH + 2 H(+). Quinone reductase that provides resistance to thiol-specific stress caused by electrophilic quinones. In terms of biological role, also exhibits azoreductase activity. Catalyzes the reductive cleavage of the azo bond in aromatic azo compounds to the corresponding amines. This Cereibacter sphaeroides (strain KD131 / KCTC 12085) (Rhodobacter sphaeroides) protein is FMN-dependent NADH:quinone oxidoreductase.